Here is a 699-residue protein sequence, read N- to C-terminus: (E2-independent) E3 ubiquitin-conjugating enzyme FATS (699 aa).

The tract at residues 48 to 116 (MISSIVISQM…LGIPAPSDER (69 aa)) is required for interaction with p53/TP53. Disordered regions lie at residues 107 to 134 (LGIP…GGPR), 443 to 473 (KPTR…ERRH), and 528 to 569 (KSED…PARS). 2 stretches are compositionally biased toward basic and acidic residues: residues 113–129 (SDER…EERP) and 460–473 (CLSR…ERRH). Residues 116–224 (RGPEAELPPK…GLCERRKYWV (109 aa)) are required for interaction with HDAC1. The span at 534–545 (TPEPSPAAPSPA) shows a compositional bias: pro residues. Residues 571-699 (TLQEALEVRK…LDQLLQRNAV (129 aa)) form an ALMS motif region.

In terms of assembly, interacts with HDAC1; the interaction prevents binding of HDAC1 to CDKN1A/p21 and facilitates the acetylation and stabilization of CDKN1A/p21. Interacts with p53/TP53; the interaction inhibits binding of p53/TP53 and MDM2.

The protein resides in the cytoplasm. The protein localises to the cytoskeleton. It is found in the microtubule organizing center. Its subcellular location is the centrosome. Its function is as follows. Tumor suppressor that is required to sustain G2/M checkpoint after DNA damage. Acts as a p53/TP53 activator by inhibiting MDM2 binding to p53/TP53 and stimulating non-proteolytic polyubiquitination of p53/TP53. Exhibits ubiquitin ligase (E3) activity and assemble ubiquitin polymers through 'Lys-11'- (K11-), 'Lys-29'- (K29-) and 'Lys-63'- (K63)-linkages, independently of the ubiquitin-conjugating enzyme (E2). Promotes p53/TP53-dependent transcription of CDKN1A/p21, leading to robust checkpoint response. Mediates CDKN1A/p21 protein stability in a ubiquitin-independent manner. Interacts with HDAC1 and prevents binding of HDAC1 to CDKN1A/p21 and facilitates the acetylation and stabilization of CDKN1A/p21. May have a role in the assembly of primary cilia. The protein is (E2-independent) E3 ubiquitin-conjugating enzyme FATS of Homo sapiens (Human).